The sequence spans 662 residues: 3',5'-cyclic-AMP phosphodiesterase, isoform F (662 aa).

Disordered regions lie at residues 79–108 (VPAS…LSQG) and 207–245 (SAGQ…RLPT). The segment covering 80 to 98 (PASNKSRRPNQSSSASRSG) has biased composition (polar residues). The 330-residue stretch at 248 to 577 (VETPRENELG…DYYQSMIPPS (330 aa)) folds into the PDEase domain. H324 acts as the Proton donor in catalysis. 324–328 (HNSLH) serves as a coordination point for 3',5'-cyclic AMP. A divalent metal cation contacts are provided by H328, H364, D365, and D482. 3',5'-cyclic AMP-binding residues include D365, D482, and Q533. The span at 599–616 (EESDQENLAELEEGDESG) shows a compositional bias: acidic residues. The disordered stretch occupies residues 599–662 (EESDQENLAE…CQNQPQHGGM (64 aa)). Low complexity predominate over residues 617 to 634 (GESTTTGTTGTTAASALS). The span at 635–646 (GAGGGGGGGGGM) shows a compositional bias: gly residues. A compositionally biased stretch (polar residues) spans 652–662 (GCQNQPQHGGM).

Belongs to the cyclic nucleotide phosphodiesterase family. PDE4 subfamily. Monomer. It depends on a divalent metal cation as a cofactor.

The enzyme catalyses 3',5'-cyclic AMP + H2O = AMP + H(+). It functions in the pathway purine metabolism; 3',5'-cyclic AMP degradation; AMP from 3',5'-cyclic AMP: step 1/1. Its function is as follows. Hydrolyzes the second messenger cAMP, which is a key regulator of many important physiological processes. Vital for female fertility. Required for learning/memory. In Drosophila melanogaster (Fruit fly), this protein is 3',5'-cyclic-AMP phosphodiesterase, isoform F.